A 654-amino-acid chain; its full sequence is Acetyl-coenzyme A synthetase (654 aa).

Residues 190 to 193 (RGGK) and Thr313 each bind CoA. ATP contacts are provided by residues 389 to 391 (GEP), 413 to 418 (DTWWQT), Asp504, and Arg519. Ser527 is a binding site for CoA. Arg530 is an ATP binding site. Positions 541 and 546 each coordinate Mg(2+). Lys613 is modified (N6-acetyllysine).

It belongs to the ATP-dependent AMP-binding enzyme family. The cofactor is Mg(2+). In terms of processing, acetylated. Deacetylation by the SIR2-homolog deacetylase activates the enzyme.

It carries out the reaction acetate + ATP + CoA = acetyl-CoA + AMP + diphosphate. Catalyzes the conversion of acetate into acetyl-CoA (AcCoA), an essential intermediate at the junction of anabolic and catabolic pathways. AcsA undergoes a two-step reaction. In the first half reaction, AcsA combines acetate with ATP to form acetyl-adenylate (AcAMP) intermediate. In the second half reaction, it can then transfer the acetyl group from AcAMP to the sulfhydryl group of CoA, forming the product AcCoA. This Leptospira borgpetersenii serovar Hardjo-bovis (strain L550) protein is Acetyl-coenzyme A synthetase.